The sequence spans 511 residues: V-type proton ATPase subunit B (511 aa).

Position 381 (arginine 381) interacts with ATP. A disordered region spans residues 484–511 (FYGRDREQDDDEEEEEDPDKSGDKLIDA). Positions 491-501 (QDDDEEEEEDP) are enriched in acidic residues. Basic and acidic residues predominate over residues 502-511 (DKSGDKLIDA).

Belongs to the ATPase alpha/beta chains family. In terms of assembly, V-ATPase is a heteromultimeric enzyme composed of a peripheral catalytic V1 complex (components A to H) attached to an integral membrane V0 proton pore complex (components: a, c, c', c'', d, e, f and VOA1).

It localises to the vacuole membrane. Functionally, non-catalytic subunit of the V1 complex of vacuolar(H+)-ATPase (V-ATPase), a multisubunit enzyme composed of a peripheral complex (V1) that hydrolyzes ATP and a membrane integral complex (V0) that translocates protons. V-ATPase is responsible for acidifying and maintaining the pH of intracellular compartments. This Candida tropicalis (Yeast) protein is V-type proton ATPase subunit B (VMA2).